A 139-amino-acid chain; its full sequence is Nucleoside diphosphate kinase (139 aa).

6 residues coordinate ATP: lysine 9, phenylalanine 57, arginine 85, threonine 91, arginine 102, and asparagine 112. Histidine 115 (pros-phosphohistidine intermediate) is an active-site residue.

It belongs to the NDK family. Homotetramer. Requires Mg(2+) as cofactor.

It localises to the cytoplasm. It catalyses the reaction a 2'-deoxyribonucleoside 5'-diphosphate + ATP = a 2'-deoxyribonucleoside 5'-triphosphate + ADP. It carries out the reaction a ribonucleoside 5'-diphosphate + ATP = a ribonucleoside 5'-triphosphate + ADP. Functionally, major role in the synthesis of nucleoside triphosphates other than ATP. The ATP gamma phosphate is transferred to the NDP beta phosphate via a ping-pong mechanism, using a phosphorylated active-site intermediate. The protein is Nucleoside diphosphate kinase of Exiguobacterium sp. (strain ATCC BAA-1283 / AT1b).